Consider the following 181-residue polypeptide: Inner membrane-spanning protein YciB (181 aa).

5 helical membrane-spanning segments follow: residues 10-30 (LIIFFAVYKFFDIYIASGALI), 50-70 (MHLITFAMVTVFGTLTLVFHD), 72-92 (AFIKWKVTIIYALFALALGVS), 118-138 (VTWYWVSFFAICGLVNIYVAF), and 148-168 (FKVFGLTALTLINTVITVFYL).

This sequence belongs to the YciB family.

The protein localises to the cell inner membrane. Functionally, plays a role in cell envelope biogenesis, maintenance of cell envelope integrity and membrane homeostasis. The polypeptide is Inner membrane-spanning protein YciB (Shewanella sp. (strain MR-4)).